A 1433-amino-acid polypeptide reads, in one-letter code: DNA-directed RNA polymerase subunit beta' (1433 aa).

Residues Cys-66, Cys-68, Cys-81, and Cys-84 each contribute to the Zn(2+) site. Mg(2+) contacts are provided by Asp-473, Asp-475, and Asp-477. Zn(2+) contacts are provided by Cys-815, Cys-889, Cys-896, and Cys-899.

This sequence belongs to the RNA polymerase beta' chain family. The RNAP catalytic core consists of 2 alpha, 1 beta, 1 beta' and 1 omega subunit. When a sigma factor is associated with the core the holoenzyme is formed, which can initiate transcription. Requires Mg(2+) as cofactor. It depends on Zn(2+) as a cofactor.

The enzyme catalyses RNA(n) + a ribonucleoside 5'-triphosphate = RNA(n+1) + diphosphate. Its function is as follows. DNA-dependent RNA polymerase catalyzes the transcription of DNA into RNA using the four ribonucleoside triphosphates as substrates. The protein is DNA-directed RNA polymerase subunit beta' of Porphyromonas gingivalis (strain ATCC BAA-308 / W83).